The primary structure comprises 261 residues: NAD(P)H-quinone oxidoreductase subunit K, chloroplastic (261 aa).

The [4Fe-4S] cluster site is built by cysteine 64, cysteine 65, cysteine 129, and cysteine 160.

This sequence belongs to the complex I 20 kDa subunit family. As to quaternary structure, NDH is composed of at least 16 different subunits, 5 of which are encoded in the nucleus. Requires [4Fe-4S] cluster as cofactor.

It is found in the plastid. Its subcellular location is the chloroplast thylakoid membrane. It carries out the reaction a plastoquinone + NADH + (n+1) H(+)(in) = a plastoquinol + NAD(+) + n H(+)(out). The enzyme catalyses a plastoquinone + NADPH + (n+1) H(+)(in) = a plastoquinol + NADP(+) + n H(+)(out). In terms of biological role, NDH shuttles electrons from NAD(P)H:plastoquinone, via FMN and iron-sulfur (Fe-S) centers, to quinones in the photosynthetic chain and possibly in a chloroplast respiratory chain. The immediate electron acceptor for the enzyme in this species is believed to be plastoquinone. Couples the redox reaction to proton translocation, and thus conserves the redox energy in a proton gradient. In Physcomitrium patens (Spreading-leaved earth moss), this protein is NAD(P)H-quinone oxidoreductase subunit K, chloroplastic.